Reading from the N-terminus, the 395-residue chain is Succinyl-diaminopimelate desuccinylase (395 aa).

Residue histidine 81 coordinates Zn(2+). Aspartate 83 is a catalytic residue. Aspartate 114 provides a ligand contact to Zn(2+). Residue glutamate 146 is the Proton acceptor of the active site. The Zn(2+) site is built by glutamate 147, glutamate 175, and histidine 364.

This sequence belongs to the peptidase M20A family. DapE subfamily. As to quaternary structure, homodimer. Zn(2+) serves as cofactor. Co(2+) is required as a cofactor.

It carries out the reaction N-succinyl-(2S,6S)-2,6-diaminopimelate + H2O = (2S,6S)-2,6-diaminopimelate + succinate. It participates in amino-acid biosynthesis; L-lysine biosynthesis via DAP pathway; LL-2,6-diaminopimelate from (S)-tetrahydrodipicolinate (succinylase route): step 3/3. In terms of biological role, catalyzes the hydrolysis of N-succinyl-L,L-diaminopimelic acid (SDAP), forming succinate and LL-2,6-diaminopimelate (DAP), an intermediate involved in the bacterial biosynthesis of lysine and meso-diaminopimelic acid, an essential component of bacterial cell walls. In Parvibaculum lavamentivorans (strain DS-1 / DSM 13023 / NCIMB 13966), this protein is Succinyl-diaminopimelate desuccinylase.